A 423-amino-acid chain; its full sequence is Type II methyltransferase M.NgoBV (423 aa).

Residues 4–423 (IKFIDLFSGM…AVSERLLHTL (420 aa)) enclose the SAM-dependent MTase C5-type domain. Cys80 is a catalytic residue.

The protein belongs to the class I-like SAM-binding methyltransferase superfamily. C5-methyltransferase family.

It carries out the reaction a 2'-deoxycytidine in DNA + S-adenosyl-L-methionine = a 5-methyl-2'-deoxycytidine in DNA + S-adenosyl-L-homocysteine + H(+). In terms of biological role, a methylase, recognizes the double-stranded sequence 5'-GGNNCC-3', methylates C-5 on both strands, and protects the DNA from cleavage by the NgoBV endonuclease. The protein is Type II methyltransferase M.NgoBV (ngoBVM) of Neisseria gonorrhoeae.